The sequence spans 438 residues: MEVPEIEKQIGINLYSTDTTGLGGQLRQEIEDFIVKEITNREEGEEGKYLIVELTKRDWDTHHLTRTLSRILQVSQKRISVAGTKDKRALTTQKISIFDTDASEIEKIHLKDIELKVLGRSRKSVELGDLWGNDFRITVRNIENSPEETEALLKKTTDEILAQGGVPNFFGIQRFGSVRPVTHLVGKAIVEGNFEKAALLYIAEPFPEEPEETKNARQFVKDTLDFKEGLKTYPLRLGHERAMMNHLIANPEDYSGSFRVLPQNLYRMFVHGYQSYIYNIILCRRIEAGIPLNRAVEGDIVCFRNEVGLPDSSKTEKVTSETVNAMNRLLKLGRAFITAPLPGYNTEFASGIPGEIENGVLKELGVSLEGFNIEKFPEMSSKGTRREVLLEVKPKFEAGEDELNPGKSKAVLEFMLPKGSYATTVLREYMKVNPLQMS.

D86 (nucleophile) is an active-site residue. Positions 165–390 (GVPNFFGIQR…SKGTRREVLL (226 aa)) constitute a TRUD domain.

Belongs to the pseudouridine synthase TruD family.

It carries out the reaction uridine(13) in tRNA = pseudouridine(13) in tRNA. Its function is as follows. Could be responsible for synthesis of pseudouridine from uracil-13 in transfer RNAs. This Methanosarcina mazei (strain ATCC BAA-159 / DSM 3647 / Goe1 / Go1 / JCM 11833 / OCM 88) (Methanosarcina frisia) protein is Probable tRNA pseudouridine synthase D.